Reading from the N-terminus, the 249-residue chain is MKLNISFPATGCQKLIEVEDERKLRTFYEKRMATEVAADPLGDEWKGYVVRISGGNDKQGFPMKQGVLTHGRVRLLLSKGHSCYRPRRTGERKRKSVRGCIVDANLSVLNLVIVRKGEKDIPGLTDNTVPRRLGPKRASRIRKLFNLSKEDDVRQYVVRKPLAKEGKKPRTKAPKIQRLVTPRVLQHKRRRIALKKQRTQKNKEEASEYAKLLAKRSKEAKEKRQEQIAKRRRLSSLRASTSKSESSQK.

2 disordered regions span residues 161–181 and 194–249; these read PLAK…RLVT and LKKQ…SSQK. Basic and acidic residues predominate over residues 216–229; it reads RSKEAKEKRQEQIA. A phosphoserine mark is found at Ser-235, Ser-236, Ser-240, Ser-244, and Ser-247. The segment covering 236 to 249 has biased composition (low complexity); sequence SLRASTSKSESSQK.

It belongs to the eukaryotic ribosomal protein eS6 family. Component of the small ribosomal subunit. Part of the small subunit (SSU) processome, composed of more than 70 proteins and the RNA chaperone small nucleolar RNA (snoRNA) U3. Post-translationally, ribosomal protein S6 is the major substrate of protein kinases in eukaryote ribosomes. The phosphorylation is stimulated by growth factors, tumor promoting agents, and mitogens. It is dephosphorylated at growth arrest.

The protein localises to the cytoplasm. It is found in the nucleus. The protein resides in the nucleolus. Its function is as follows. Component of the 40S small ribosomal subunit. Plays an important role in controlling cell growth and proliferation through the selective translation of particular classes of mRNA. Part of the small subunit (SSU) processome, first precursor of the small eukaryotic ribosomal subunit. During the assembly of the SSU processome in the nucleolus, many ribosome biogenesis factors, an RNA chaperone and ribosomal proteins associate with the nascent pre-rRNA and work in concert to generate RNA folding, modifications, rearrangements and cleavage as well as targeted degradation of pre-ribosomal RNA by the RNA exosome. The protein is Small ribosomal subunit protein eS6 (rps6) of Xenopus laevis (African clawed frog).